Here is a 61-residue protein sequence, read N- to C-terminus: UPF0181 protein MS1074 (61 aa).

It belongs to the UPF0181 family.

The sequence is that of UPF0181 protein MS1074 from Mannheimia succiniciproducens (strain KCTC 0769BP / MBEL55E).